The sequence spans 185 residues: UPF0301 protein MS0260 (185 aa).

Belongs to the UPF0301 (AlgH) family.

The chain is UPF0301 protein MS0260 from Mannheimia succiniciproducens (strain KCTC 0769BP / MBEL55E).